The chain runs to 248 residues: ATP synthase subunit a, chloroplastic (248 aa).

5 consecutive transmembrane segments (helical) span residues 38–58 (QVLITSWVVIAVLLGSATIAV), 96–116 (VPFIGTMFLFILVSNWSGALL), 135–155 (INTTVALALLTSVAYFYAGLA), 200–220 (LVVAVLVSLVPLVVPIPVMFL), and 221–241 (GLFTSAIQALIFATLAAAYIG).

It belongs to the ATPase A chain family. In terms of assembly, F-type ATPases have 2 components, CF(1) - the catalytic core - and CF(0) - the membrane proton channel. CF(1) has five subunits: alpha(3), beta(3), gamma(1), delta(1), epsilon(1). CF(0) has four main subunits: a, b, b' and c.

The protein localises to the plastid. It localises to the chloroplast thylakoid membrane. Its function is as follows. Key component of the proton channel; it plays a direct role in the translocation of protons across the membrane. The polypeptide is ATP synthase subunit a, chloroplastic (Cycas taitungensis (Prince sago)).